We begin with the raw amino-acid sequence, 82 residues long: Diphthamide biosynthesis protein 3 (82 aa).

The region spanning 3–59 is the DPH-type MB domain; sequence TYDEIEIEDMTFEPENQMFTYPCPCGDRFQIYLDDMFEGEKVAVCPSCSLMIDVVFD. Cysteine 25, cysteine 27, cysteine 47, and cysteine 50 together coordinate Fe cation. A required for interaction with the elongator complex region spans residues 66–82; it reads YYEEAGIHPPEPIAAAA.

It belongs to the DPH3 family. Component of the 2-(3-amino-3-carboxypropyl)histidine synthase complex composed of DPH1, DPH2, KTI11/DPH3 and a NADH-dependent reductase, predominantly CBR1. Interacts with DPH1. Interacts with DPH2. Interacts with CBR1. Interacts with elongation factor 2. Interacts with ATS1/KTI13; the interaction is direct. Interacts with the 40S ribosomal protein RPS7A. Interacts with the 40S ribosomal protein RPS19A. Interacts with the elongator complex subunit IKI3/ELP1. Interacts with the elongator complex subunit ELP2. Interacts with the elongator complex subunit ELP3. Interacts with the elongator complex subunit ELP5.

Its subcellular location is the cytoplasm. The protein localises to the nucleus. It catalyses the reaction [3Fe-4S](1+)-[protein] + Fe(2+)-[Dph3] = [3Fe-4S](0)-[protein] + Fe(3+)-[Dph3]. It carries out the reaction 2 [3Fe-4S](0)-[protein] + 2 Fe(2+)-[Dph3] + NADH = 2 [4Fe-4S](1+)-[protein] + 2 [Dph3] + NAD(+) + H(+). The protein operates within protein modification; peptidyl-diphthamide biosynthesis. Its function is as follows. Required for the first step of diphthamide biosynthesis, a post-translational modification of histidine which occurs in elongation factor 2. DPH1 and DPH2 transfer a 3-amino-3-carboxypropyl (ACP) group from S-adenosyl-L-methionine (SAM) to a histidine residue, the reaction is assisted by a reduction system comprising KTI11/DPH3 and a NADH-dependent reductase, predominantly CBR1. Acts as an electron donor to reduce the Fe-S cluster in DPH1-DPH2 keeping the [4Fe-4S] clusters in the active and reduced state. Restores iron to DPH1-DPH2 iron-sulfur clusters which have degraded from [4Fe-4S] to [3Fe-4S] by donating an iron atom to reform [4Fe-4S] clusters, in a manner dependent on the presence of elongation factor 2 and SAM. Together with ATS1; associates with the elongator complex and is required for tRNA Wobble base modifications mediated by the elongator complex. The elongator complex is required for multiple tRNA modifications, including mcm5U (5-methoxycarbonylmethyl uridine), mcm5s 2U (5-methoxycarbonylmethyl-2-thiouridine), and ncm5U (5-carbamoylmethyl uridine). The chain is Diphthamide biosynthesis protein 3 from Saccharomyces cerevisiae (strain ATCC 204508 / S288c) (Baker's yeast).